We begin with the raw amino-acid sequence, 544 residues long: Esterase-6 (544 aa).

The signal sequence occupies residues 1–21 (MNYVGLGLIIVLSCLWLGSNA). N-linked (GlcNAc...) asparagine glycosylation occurs at asparagine 42. An intrachain disulfide couples cysteine 86 to cysteine 105. Serine 209 (acyl-ester intermediate) is an active-site residue. A disulfide bridge links cysteine 261 with cysteine 273. Asparagine 420 and asparagine 456 each carry an N-linked (GlcNAc...) asparagine glycan. The Charge relay system role is filled by histidine 466. A glycan (N-linked (GlcNAc...) asparagine) is linked at asparagine 506. A disulfide bridge links cysteine 514 with cysteine 535.

This sequence belongs to the type-B carboxylesterase/lipase family. Monomer. In terms of tissue distribution, specifically expressed in the ejaculatory bulbs of male.

The protein resides in the secreted. The enzyme catalyses a carboxylic ester + H2O = an alcohol + a carboxylate + H(+). Functionally, transferred from the ejaculatory bulbs of males to the female genitals upon copulation, plays an important role in the reproductive biology. The chain is Esterase-6 (Est-6) from Drosophila melanogaster (Fruit fly).